A 418-amino-acid chain; its full sequence is MKFIDEITLNVKAGKGGNGMIAFRREAHVDRGGPSGGDGGNGGNIYFVGDLGKNTLLHLYLQKSIVGNNGVNGGRKNLYGAAGEDKFIKVPVGTVVYEGQKVIADIVEEKPYLIAKGGRGGRGNTKFKTAKNKAPRISENGLPGESKKLTLVLKVLADVGFVGKPSAGKSTLLSVISNAKPTIADYDFTTLVPQLGLVKYFDNSFVVADLPGLIKGAHQGKGLGIRFLKHIERCKVIANVIDFGDENKNPLQDYQEIRNELKLYNLNLEEKDEVIVANKKDQECFEKKLEEFSKHYPNKKIIAISALKQENLDKLKEALWQSVKNTKDIVFELSEDEEVFINFEADFNVVHLGEGQYLVEGPKIHHFYQRIPLNTHDNLMRFNLILKKMGVWDELIKQGIQIGDSVKIYDYEFVWGNE.

The 156-residue stretch at 1-156 (MKFIDEITLN…KKLTLVLKVL (156 aa)) folds into the Obg domain. The region spanning 157–324 (ADVGFVGKPS…LKEALWQSVK (168 aa)) is the OBG-type G domain. GTP is bound by residues 163–170 (GKPSAGKS), 188–192 (FTTLV), 209–212 (DLPG), 278–281 (NKKD), and 305–307 (SAL). Mg(2+) contacts are provided by serine 170 and threonine 190. Residues 339–417 (VFINFEADFN…IYDYEFVWGN (79 aa)) form the OCT domain.

This sequence belongs to the TRAFAC class OBG-HflX-like GTPase superfamily. OBG GTPase family. In terms of assembly, monomer. The cofactor is Mg(2+).

Its subcellular location is the cytoplasm. In terms of biological role, an essential GTPase which binds GTP, GDP and possibly (p)ppGpp with moderate affinity, with high nucleotide exchange rates and a fairly low GTP hydrolysis rate. Plays a role in control of the cell cycle, stress response, ribosome biogenesis and in those bacteria that undergo differentiation, in morphogenesis control. The protein is GTPase Obg of Mycoplasmopsis pulmonis (strain UAB CTIP) (Mycoplasma pulmonis).